Consider the following 96-residue polypeptide: UPF0235 protein ESA_00387 (96 aa).

It belongs to the UPF0235 family.

This is UPF0235 protein ESA_00387 from Cronobacter sakazakii (strain ATCC BAA-894) (Enterobacter sakazakii).